A 149-amino-acid chain; its full sequence is Probable cyclic pyranopterin monophosphate synthase (149 aa).

Substrate contacts are provided by residues 67–69 and 103–104; these read LCH and ME. D118 is a catalytic residue.

This sequence belongs to the MoaC family. As to quaternary structure, homohexamer; trimer of dimers.

The catalysed reaction is (8S)-3',8-cyclo-7,8-dihydroguanosine 5'-triphosphate = cyclic pyranopterin phosphate + diphosphate. It functions in the pathway cofactor biosynthesis; molybdopterin biosynthesis. Functionally, catalyzes the conversion of (8S)-3',8-cyclo-7,8-dihydroguanosine 5'-triphosphate to cyclic pyranopterin monophosphate (cPMP). The polypeptide is Probable cyclic pyranopterin monophosphate synthase (Saccharolobus solfataricus (strain ATCC 35092 / DSM 1617 / JCM 11322 / P2) (Sulfolobus solfataricus)).